The following is a 304-amino-acid chain: Protoheme IX farnesyltransferase (304 aa).

9 consecutive transmembrane segments (helical) span residues 32–52, 54–74, 104–124, 126–146, 154–174, 180–200, 226–246, 247–267, and 284–304; these read VVALMLLTVLVGMCLAVPGSV, LQPLVIGMIGIGMMAGAAAAF, ALTFAISLAALGFVLLYTLVN, LTAWLTFASLIGYALVYTAYL, IVVGGLAGAMPPLLGWTSVTG, ALLLVIIIFAWTPPHFWALAI, CILLYTVLLAIACLLPVLVGM, CGPVYLVGSTLLSCGFIYKAW, and FSIYHLMLLFLVLLVDHYLWV.

This sequence belongs to the UbiA prenyltransferase family. Protoheme IX farnesyltransferase subfamily.

The protein resides in the cell inner membrane. It catalyses the reaction heme b + (2E,6E)-farnesyl diphosphate + H2O = Fe(II)-heme o + diphosphate. It participates in porphyrin-containing compound metabolism; heme O biosynthesis; heme O from protoheme: step 1/1. In terms of biological role, converts heme B (protoheme IX) to heme O by substitution of the vinyl group on carbon 2 of heme B porphyrin ring with a hydroxyethyl farnesyl side group. This is Protoheme IX farnesyltransferase from Shewanella sediminis (strain HAW-EB3).